We begin with the raw amino-acid sequence, 123 residues long: Small ribosomal subunit protein eS8 (123 aa).

Positions 1–38 are disordered; the sequence is MKDQGRSPRKRTGGRRRPNHKKKKHELGKDTVETQVGE. Basic residues predominate over residues 7–26; that stretch reads SPRKRTGGRRRPNHKKKKHE.

Part of the 30S ribosomal subunit.

The polypeptide is Small ribosomal subunit protein eS8 (rps8e) (Haloarcula marismortui (strain ATCC 43049 / DSM 3752 / JCM 8966 / VKM B-1809) (Halobacterium marismortui)).